The sequence spans 318 residues: cAMP/cGMP dual specificity phosphodiesterase MT0825 (318 aa).

Fe cation contacts are provided by D21, H23, and D63. AMP-binding positions include H23, D63, and 97–98 (NH). Mn(2+) contacts are provided by D63, N97, H169, and H207. H209 lines the Fe cation pocket. H209 provides a ligand contact to AMP. The segment at 278-318 (PGQARRKIAESGIFIEPSRRDSLFKHPPMVLTSSAPRSPVD) is C-terminal extension.

Belongs to the cyclic nucleotide phosphodiesterase class-III family. In terms of assembly, homodimer. It depends on Fe(3+) as a cofactor. The cofactor is Mn(2+).

It localises to the cytoplasm. Its subcellular location is the cell membrane. The protein localises to the secreted. The protein resides in the cell wall. It is found in the cell envelope. It catalyses the reaction a nucleoside 2',3'-cyclic phosphate + H2O = a nucleoside 3'-phosphate + H(+). The catalysed reaction is 2',3'-cyclophospho-AMP + H2O = 3'-AMP + H(+). It carries out the reaction 2',3'-cyclophospho-GMP + H2O = 3'-GMP + H(+). The enzyme catalyses a nucleoside 3',5'-cyclic phosphate + H2O = a nucleoside 5'-phosphate + H(+). It catalyses the reaction 3',5'-cyclic AMP + H2O = AMP + H(+). The catalysed reaction is 3',5'-cyclic GMP + H2O = GMP + H(+). In terms of biological role, cyclic nucleotide phosphodiesterase with a dual-specificity for the second messengers cAMP and cGMP. The sequence is that of cAMP/cGMP dual specificity phosphodiesterase MT0825 from Mycobacterium tuberculosis (strain CDC 1551 / Oshkosh).